Consider the following 244-residue polypeptide: uncharacterized protein (244 aa).

The HTH gntR-type domain occupies 7 to 74 (VKEKDQVVAH…YHRGAFIERF (68 aa)). Positions 34–53 (RNEIAHGLGVSRVPIQEALV) form a DNA-binding region, H-T-H motif.

This is an uncharacterized protein from Mycobacterium tuberculosis (strain CDC 1551 / Oshkosh).